A 342-amino-acid polypeptide reads, in one-letter code: MGPSLETPEPVEDVLANPLKQKPQLVAPEPEHCPGPESEQAGTADSCAGCPNQAICASAPKGPDPDLPAITARLAGVKHKILVLSGKGGVGKSTLTAQLAQALATNPEATVGVMDTDICGPSIPKMLGVEAETIHVSGSGWSPVWAADNLAVMSIQFMLPNRDDAIIWRGPKKNGLIKQFLKDVEWGDLDFLLVDTPPGTSDEHLSVNTFLKESRIEGAVVVTTPQEVSLLDVRKEIDFCRKAGIRILGLVENMSLFVCPKCTHATEIFQATTGGGRALAAEMGIPFLGAVPLDPRLGMACDYGESFFDSFPDSPACLALKQVVRGLAGQIGLDPKEVVPEG.

The tract at residues 1-45 is disordered; it reads MGPSLETPEPVEDVLANPLKQKPQLVAPEPEHCPGPESEQAGTAD. The [4Fe-4S] cluster site is built by Cys33, Cys47, Cys50, and Cys56. Residue 86-93 participates in ATP binding; it reads GKGGVGKS. Cys259 and Cys262 together coordinate [4Fe-4S] cluster.

This sequence belongs to the Mrp/NBP35 ATP-binding proteins family. NUBP1/NBP35 subfamily. As to quaternary structure, heterotetramer of 2 NBP35 and 2 CFD1 chains. It depends on [4Fe-4S] cluster as a cofactor.

The protein resides in the cytoplasm. Component of the cytosolic iron-sulfur (Fe/S) protein assembly (CIA) machinery. Required for maturation of extramitochondrial Fe-S proteins. The NBP35-CFD1 heterotetramer forms a Fe-S scaffold complex, mediating the de novo assembly of an Fe-S cluster and its transfer to target apoproteins. This chain is Cytosolic Fe-S cluster assembly factor NBP35, found in Chaetomium globosum (strain ATCC 6205 / CBS 148.51 / DSM 1962 / NBRC 6347 / NRRL 1970) (Soil fungus).